The primary structure comprises 116 residues: Large ribosomal subunit protein bL17 (116 aa).

It belongs to the bacterial ribosomal protein bL17 family. In terms of assembly, part of the 50S ribosomal subunit. Contacts protein L32.

The polypeptide is Large ribosomal subunit protein bL17 (Synechococcus sp. (strain RCC307)).